We begin with the raw amino-acid sequence, 427 residues long: Glutamate-1-semialdehyde 2,1-aminomutase (427 aa).

Lys265 is subject to N6-(pyridoxal phosphate)lysine.

Belongs to the class-III pyridoxal-phosphate-dependent aminotransferase family. HemL subfamily. As to quaternary structure, homodimer. The cofactor is pyridoxal 5'-phosphate.

The protein localises to the cytoplasm. The enzyme catalyses (S)-4-amino-5-oxopentanoate = 5-aminolevulinate. It participates in porphyrin-containing compound metabolism; protoporphyrin-IX biosynthesis; 5-aminolevulinate from L-glutamyl-tRNA(Glu): step 2/2. The chain is Glutamate-1-semialdehyde 2,1-aminomutase from Neisseria meningitidis serogroup C (strain 053442).